A 196-amino-acid chain; its full sequence is Gastrula zinc finger protein XlCGF8.2DB (196 aa).

7 C2H2-type zinc fingers span residues 6–28, 34–56, 62–84, 90–112, 118–140, 146–168, and 174–196; these read FTCK…MTIH, FSCT…LTIH, FPCT…MKIH, FTCT…LKIH, FSCT…MKIH, FTCT…LKMH, and FTCT…MKIH.

This sequence belongs to the krueppel C2H2-type zinc-finger protein family.

The protein localises to the nucleus. Functionally, may be involved in transcriptional regulation. The polypeptide is Gastrula zinc finger protein XlCGF8.2DB (Xenopus laevis (African clawed frog)).